Here is a 188-residue protein sequence, read N- to C-terminus: Large ribosomal subunit protein eL18 (188 aa).

Residue lysine 119 forms a Glycyl lysine isopeptide (Lys-Gly) (interchain with G-Cter in SUMO2) linkage. At serine 130 the chain carries Phosphoserine. The segment at 150 to 188 (RHFGKAPGTPHSHTKPYVRSKGRKFERARGRRASRGYKN) is disordered. Position 158 is a phosphothreonine (threonine 158). 2 stretches are compositionally biased toward basic residues: residues 161–171 (SHTKPYVRSKG) and 178–188 (RGRRASRGYKN). Lysine 164 is covalently cross-linked (Glycyl lysine isopeptide (Lys-Gly) (interchain with G-Cter in SUMO2)).

It belongs to the eukaryotic ribosomal protein eL18 family. As to quaternary structure, component of the large ribosomal subunit.

It is found in the cytoplasm. The protein localises to the cytosol. The protein resides in the rough endoplasmic reticulum. Component of the large ribosomal subunit. The ribosome is a large ribonucleoprotein complex responsible for the synthesis of proteins in the cell. In Rattus norvegicus (Rat), this protein is Large ribosomal subunit protein eL18 (Rpl18).